A 352-amino-acid chain; its full sequence is Speedy protein E18 (352 aa).

A compositionally biased stretch (basic residues) spans 1–12; sequence MDRTKTRFRKRG. A disordered region spans residues 1–90; sequence MDRTKTRFRK…EPEKELAPEP (90 aa). The segment covering 16–39 has biased composition (polar residues); the sequence is GKITTSRQPHPQNEQSLQRSTSGY. Residues 76–90 show a composition bias toward acidic residues; that stretch reads DESEEEPEKELAPEP.

This sequence belongs to the Speedy/Ringo family.

In Homo sapiens (Human), this protein is Speedy protein E18.